The chain runs to 216 residues: Invasion protein InvF (216 aa).

The region spanning 112–210 (YWLVGYLLAQ…GVSPRKLSNI (99 aa)) is the HTH araC/xylS-type domain. 2 consecutive DNA-binding regions (H-T-H motif) follow at residues 129–150 (RMLG…SRAL) and 177–200 (ITQL…KELI).

Its function is as follows. Transcriptional regulator required for the expression of several genes encoding type III secretion system SPI1 effector proteins. The interaction with SicA is necessary for the activation of sigDE (sopB pipC), sicAsipBCDA, and sopE. The chain is Invasion protein InvF (invF) from Salmonella typhi.